The following is an 826-amino-acid chain: Zinc phosphodiesterase ELAC protein 2 (826 aa).

Residues 1-16 constitute a mitochondrion transit peptide; the sequence is MWALCSLLRSATGRTM. Residues 15–27 show a composition bias toward polar residues; sequence TMSQGRTISQGSA. Disordered stretches follow at residues 15 to 53 and 187 to 231; these read TMSQ…GSSG and SEQR…VSQR. Residues S199, S208, S212, S229, S618, and S736 each carry the phosphoserine modification. Positions 208 to 224 are enriched in basic and acidic residues; it reads SPERSSDSESNESEPHL. The disordered stretch occupies residues 798–826; it reads ALTDDLEDGEPQQKRAHTEEPQSKKVRAQ. Residues 808 to 820 show a composition bias toward basic and acidic residues; it reads PQQKRAHTEEPQS.

It belongs to the RNase Z family. As to quaternary structure, homodimer. Interacts with PTCD1. The cofactor is Zn(2+).

It is found in the mitochondrion. The protein localises to the mitochondrion matrix. It localises to the mitochondrion nucleoid. Its subcellular location is the nucleus. The enzyme catalyses Endonucleolytic cleavage of RNA, removing extra 3' nucleotides from tRNA precursor, generating 3' termini of tRNAs. A 3'-hydroxy group is left at the tRNA terminus and a 5'-phosphoryl group is left at the trailer molecule.. Its function is as follows. Zinc phosphodiesterase, which displays mitochondrial tRNA 3'-processing endonuclease activity. Involved in tRNA maturation, by removing a 3'-trailer from precursor tRNA. Associates with mitochondrial DNA complexes at the nucleoids to initiate RNA processing and ribosome assembly. This Macaca fascicularis (Crab-eating macaque) protein is Zinc phosphodiesterase ELAC protein 2 (ELAC2).